We begin with the raw amino-acid sequence, 129 residues long: MAKEPTRVRRRERKNIVSGVAHVNASFNNTMITITDAQGNTISWSSAGAMGFKGSRKSTPYAAQVAAEDAGRKAAEHGMRTLEVEVSGPGSGRESALRALQAAGFTVTSIRDVTSIPHNGCRPRKRRRV.

This sequence belongs to the universal ribosomal protein uS11 family. Part of the 30S ribosomal subunit. Interacts with proteins S7 and S18. Binds to IF-3.

Functionally, located on the platform of the 30S subunit, it bridges several disparate RNA helices of the 16S rRNA. Forms part of the Shine-Dalgarno cleft in the 70S ribosome. This Methylorubrum populi (strain ATCC BAA-705 / NCIMB 13946 / BJ001) (Methylobacterium populi) protein is Small ribosomal subunit protein uS11.